The following is a 92-amino-acid chain: Protein S100-B (92 aa).

Residue Ser2 is modified to N-acetylserine. EF-hand domains are found at residues Asp13 to Ile48 and Lys49 to Ala84. His16 contributes to the Zn(2+) binding site. Ca(2+)-binding residues include Ser19, Glu22, and Asp24. Residue His26 participates in Zn(2+) binding. Residues Asp62, Asp64, Asp66, Glu68, and Glu73 each coordinate Ca(2+). Residues His86 and His91 each coordinate Zn(2+).

It belongs to the S-100 family. Dimer of either two alpha chains, or two beta chains, or one alpha and one beta chain. The S100B dimer binds two molecules of STK38. Interacts with CACYBP in a calcium-dependent manner. Interacts with ATAD3A; this interaction probably occurs in the cytosol prior to ATAD3A mitochondrial targeting. Interacts with S100A6. The S100B dimer interacts with two molecules of CAPZA1. Interacts with AGER. Interacts with PPP5C (via TPR repeats); the interaction is calcium-dependent and modulates PPP5C activity. Interacts with TPPP; this interaction inhibits TPPP dimerization. Interacts with isoform CLSTN3beta of CLSTN3; interaction promotes secretion.

It localises to the cytoplasm. The protein resides in the nucleus. It is found in the secreted. Its function is as follows. Small zinc- and- and calcium-binding protein that is highly expressed in astrocytes and constitutes one of the most abundant soluble proteins in brain. Weakly binds calcium but binds zinc very tightly-distinct binding sites with different affinities exist for both ions on each monomer. Physiological concentrations of potassium ion antagonize the binding of both divalent cations, especially affecting high-affinity calcium-binding sites. Acts as a neurotrophic factor that promotes astrocytosis and axonal proliferation. Involved in innervation of thermogenic adipose tissue by acting as an adipocyte-derived neurotrophic factor that promotes sympathetic innervation of adipose tissue. Binds to and initiates the activation of STK38 by releasing autoinhibitory intramolecular interactions within the kinase. Interaction with AGER after myocardial infarction may play a role in myocyte apoptosis by activating ERK1/2 and p53/TP53 signaling. Could assist ATAD3A cytoplasmic processing, preventing aggregation and favoring mitochondrial localization. May mediate calcium-dependent regulation on many physiological processes by interacting with other proteins, such as TPR-containing proteins, and modulating their activity. The sequence is that of Protein S100-B (S100B) from Bos taurus (Bovine).